A 182-amino-acid chain; its full sequence is ATP synthase subunit delta (182 aa).

The protein belongs to the ATPase delta chain family. F-type ATPases have 2 components, F(1) - the catalytic core - and F(0) - the membrane proton channel. F(1) has five subunits: alpha(3), beta(3), gamma(1), delta(1), epsilon(1). CF(0) has four main subunits: a(1), b(1), b'(1) and c(10-14). The alpha and beta chains form an alternating ring which encloses part of the gamma chain. F(1) is attached to F(0) by a central stalk formed by the gamma and epsilon chains, while a peripheral stalk is formed by the delta, b and b' chains.

The protein localises to the cellular thylakoid membrane. Functionally, f(1)F(0) ATP synthase produces ATP from ADP in the presence of a proton or sodium gradient. F-type ATPases consist of two structural domains, F(1) containing the extramembraneous catalytic core and F(0) containing the membrane proton channel, linked together by a central stalk and a peripheral stalk. During catalysis, ATP synthesis in the catalytic domain of F(1) is coupled via a rotary mechanism of the central stalk subunits to proton translocation. This protein is part of the stalk that links CF(0) to CF(1). It either transmits conformational changes from CF(0) to CF(1) or is implicated in proton conduction. The protein is ATP synthase subunit delta of Prochlorococcus marinus (strain NATL1A).